An 880-amino-acid chain; its full sequence is Tyrosine-protein kinase receptor TYRO3 (880 aa).

An N-terminal signal peptide occupies residues Met1–Ala30. Ig-like C2-type domains lie at Ala31–Ser118 and Pro129–Val209. Over Ala31–Trp419 the chain is Extracellular. Asn53, Asn75, Asn181, Asn220, Asn230, Asn283, Asn356, and Asn370 each carry an N-linked (GlcNAc...) asparagine glycan. 2 disulfide bridges follow: Cys54-Cys107 and Cys150-Cys193. 2 Fibronectin type-III domains span residues Ala217 to Leu310 and Ala315 to His406. Residues Val420–Leu440 form a helical membrane-spanning segment. Residues Leu441 to Cys880 lie on the Cytoplasmic side of the membrane. Ser456 carries the post-translational modification Phosphoserine. The Protein kinase domain maps to Phe508–Val785. ATP is bound by residues Leu514–Val522 and Lys540. Asp645 (proton acceptor) is an active-site residue. Phosphotyrosine; by autocatalysis occurs at positions 671, 675, 676, and 794. The tract at residues Ala800–Asn864 is disordered. 2 positions are modified to phosphoserine: Ser808 and Ser859. Over residues Ser849–Asn864 the composition is skewed to polar residues.

It belongs to the protein kinase superfamily. Tyr protein kinase family. AXL/UFO subfamily. As to quaternary structure, monomer and homodimer. Interacts (via N-terminus) with extracellular ligands TULP1 and GAS6. Interacts with PIK3R1; this interaction increases PI3-kinase activity. Post-translationally, autophosphorylated. In terms of tissue distribution, abundant in the brain and lower levels in other tissues.

The protein localises to the cell membrane. It catalyses the reaction L-tyrosyl-[protein] + ATP = O-phospho-L-tyrosyl-[protein] + ADP + H(+). Receptor tyrosine kinase that transduces signals from the extracellular matrix into the cytoplasm by binding to several ligands including TULP1 or GAS6. Regulates many physiological processes including cell survival, migration and differentiation. Ligand binding at the cell surface induces dimerization and autophosphorylation of TYRO3 on its intracellular domain that provides docking sites for downstream signaling molecules. Following activation by ligand, interacts with PIK3R1 and thereby enhances PI3-kinase activity. Activates the AKT survival pathway, including nuclear translocation of NF-kappa-B and up-regulation of transcription of NF-kappa-B-regulated genes. TYRO3 signaling plays a role in various processes such as neuron protection from excitotoxic injury, platelet aggregation and cytoskeleton reorganization. Also plays an important role in inhibition of Toll-like receptors (TLRs)-mediated innate immune response by activating STAT1, which selectively induces production of suppressors of cytokine signaling SOCS1 and SOCS3. The sequence is that of Tyrosine-protein kinase receptor TYRO3 (Tyro3) from Mus musculus (Mouse).